The chain runs to 180 residues: Large ribosomal subunit protein uL6 (180 aa).

This sequence belongs to the universal ribosomal protein uL6 family. In terms of assembly, part of the 50S ribosomal subunit.

Functionally, this protein binds to the 23S rRNA, and is important in its secondary structure. It is located near the subunit interface in the base of the L7/L12 stalk, and near the tRNA binding site of the peptidyltransferase center. In Clostridium botulinum (strain Langeland / NCTC 10281 / Type F), this protein is Large ribosomal subunit protein uL6.